We begin with the raw amino-acid sequence, 181 residues long: Interleukin-24 (181 aa).

Residues 1 to 26 form the signal peptide; the sequence is MSWGLQILPCLSLILLLWNQVPGLEG. Cys-34 and Cys-81 are oxidised to a cystine. A glycan (N-linked (GlcNAc...) asparagine) is linked at Asn-74. Residue Lys-97 forms a Glycyl lysine isopeptide (Lys-Gly) (interchain with G-Cter in ubiquitin) linkage.

Belongs to the IL-10 family. In terms of processing, glycosylated. Post-translationally, ubiquitination at Lys-97 promotes proteasomal degradation. As to expression, selectively expressed by Th2 cells. Expressed in the liver.

It is found in the secreted. In terms of biological role, multifunctional cytokine mainly produced by T-cells that plays a regulatory role in immune response, tissue homeostasis, host defense, and oncogenesis. Possesses antiviral functions and induces the type I interferon response during influenza infection. Signals through two receptor complexes IL20RA/IL20RB or IL20RB/IL22RA1. In turn, stimulates the JAK1-STAT3 and MAPK pathways and promotes the secretion of pro-inflammatory mediators including IL8 and MMP1. Intracellularly, maintains endoplasmic reticulum homeostasis by restricting the eIF2alpha-CHOP pathway-mediated stress signal. In addition, acts as a quality control mechanism for the ubiquitin proteasome system by alerting the cell to proteasome dysfunction through activation of PKR/EIF2AK2. This chain is Interleukin-24 (Il24), found in Mus musculus (Mouse).